The sequence spans 898 residues: Phosphoenolpyruvate carboxylase (898 aa).

Active-site residues include His138 and Lys561.

It belongs to the PEPCase type 1 family. It depends on Mg(2+) as a cofactor.

It catalyses the reaction oxaloacetate + phosphate = phosphoenolpyruvate + hydrogencarbonate. Forms oxaloacetate, a four-carbon dicarboxylic acid source for the tricarboxylic acid cycle. The protein is Phosphoenolpyruvate carboxylase of Streptococcus suis (strain 98HAH33).